Consider the following 145-residue polypeptide: MSLMTPLLIRDVLKALPHRYPFVLVDRVFSTENGEVHALKNVTINEPFFMGHFPTEPVMPGVLITEALAQASMFCLHGQMEPGQIGYLAGIEGARFKRKVIPGDQLHLHAKLEFLRRGLGKTTCRAEVDGEVAAEMQILFAVAKG.

His52 is an active-site residue.

This sequence belongs to the thioester dehydratase family. FabZ subfamily.

The protein localises to the cytoplasm. It catalyses the reaction a (3R)-hydroxyacyl-[ACP] = a (2E)-enoyl-[ACP] + H2O. Functionally, involved in unsaturated fatty acids biosynthesis. Catalyzes the dehydration of short chain beta-hydroxyacyl-ACPs and long chain saturated and unsaturated beta-hydroxyacyl-ACPs. In Deinococcus radiodurans (strain ATCC 13939 / DSM 20539 / JCM 16871 / CCUG 27074 / LMG 4051 / NBRC 15346 / NCIMB 9279 / VKM B-1422 / R1), this protein is 3-hydroxyacyl-[acyl-carrier-protein] dehydratase FabZ.